The sequence spans 287 residues: ATP synthase gamma chain (287 aa).

The protein belongs to the ATPase gamma chain family. In terms of assembly, F-type ATPases have 2 components, CF(1) - the catalytic core - and CF(0) - the membrane proton channel. CF(1) has five subunits: alpha(3), beta(3), gamma(1), delta(1), epsilon(1). CF(0) has three main subunits: a, b and c.

It localises to the cell inner membrane. In terms of biological role, produces ATP from ADP in the presence of a proton gradient across the membrane. The gamma chain is believed to be important in regulating ATPase activity and the flow of protons through the CF(0) complex. The polypeptide is ATP synthase gamma chain (Xylella fastidiosa (strain M23)).